Consider the following 96-residue polypeptide: ESAT-6-like protein EsxR (96 aa).

It belongs to the WXG100 family. ESAT-6 subfamily.

The protein resides in the secreted. The chain is ESAT-6-like protein EsxR from Mycobacterium bovis (strain ATCC BAA-935 / AF2122/97).